We begin with the raw amino-acid sequence, 172 residues long: Ribosome maturation factor RimM (172 aa).

Residues 97 to 170 enclose the PRC barrel domain; it reads ENEFYFHEII…KITIEVMEGL (74 aa).

The protein belongs to the RimM family. In terms of assembly, binds ribosomal protein uS19.

Its subcellular location is the cytoplasm. Its function is as follows. An accessory protein needed during the final step in the assembly of 30S ribosomal subunit, possibly for assembly of the head region. Essential for efficient processing of 16S rRNA. May be needed both before and after RbfA during the maturation of 16S rRNA. It has affinity for free ribosomal 30S subunits but not for 70S ribosomes. The chain is Ribosome maturation factor RimM from Listeria monocytogenes serovar 1/2a (strain ATCC BAA-679 / EGD-e).